Here is a 225-residue protein sequence, read N- to C-terminus: 2-C-methyl-D-erythritol 4-phosphate cytidylyltransferase (225 aa).

The protein belongs to the IspD/TarI cytidylyltransferase family. IspD subfamily.

The enzyme catalyses 2-C-methyl-D-erythritol 4-phosphate + CTP + H(+) = 4-CDP-2-C-methyl-D-erythritol + diphosphate. The protein operates within isoprenoid biosynthesis; isopentenyl diphosphate biosynthesis via DXP pathway; isopentenyl diphosphate from 1-deoxy-D-xylulose 5-phosphate: step 2/6. Functionally, catalyzes the formation of 4-diphosphocytidyl-2-C-methyl-D-erythritol from CTP and 2-C-methyl-D-erythritol 4-phosphate (MEP). This chain is 2-C-methyl-D-erythritol 4-phosphate cytidylyltransferase, found in Cereibacter sphaeroides (strain ATCC 17023 / DSM 158 / JCM 6121 / CCUG 31486 / LMG 2827 / NBRC 12203 / NCIMB 8253 / ATH 2.4.1.) (Rhodobacter sphaeroides).